We begin with the raw amino-acid sequence, 326 residues long: Vitamin B12 import system permease protein BtuC (326 aa).

Helical transmembrane passes span Trp-15–Glu-35, Leu-61–Phe-81, Pro-88–Gly-108, Leu-112–Leu-132, Leu-146–Phe-166, Gly-184–Ile-204, Gly-240–Ile-260, Val-274–Ala-294, and Glu-302–Leu-322.

It belongs to the binding-protein-dependent transport system permease family. FecCD subfamily. In terms of assembly, the complex is composed of two ATP-binding proteins (BtuD), two transmembrane proteins (BtuC) and a solute-binding protein (BtuF).

It localises to the cell inner membrane. Part of the ABC transporter complex BtuCDF involved in vitamin B12 import. Involved in the translocation of the substrate across the membrane. This is Vitamin B12 import system permease protein BtuC from Salmonella agona (strain SL483).